The primary structure comprises 160 residues: Endoribonuclease YbeY (160 aa).

Zn(2+) contacts are provided by histidine 123, histidine 127, and histidine 133.

The protein belongs to the endoribonuclease YbeY family. Requires Zn(2+) as cofactor.

Its subcellular location is the cytoplasm. Its function is as follows. Single strand-specific metallo-endoribonuclease involved in late-stage 70S ribosome quality control and in maturation of the 3' terminus of the 16S rRNA. The protein is Endoribonuclease YbeY of Roseiflexus sp. (strain RS-1).